A 266-amino-acid polypeptide reads, in one-letter code: Probable septum site-determining protein MinC (266 aa).

The segment at 98–146 is disordered; it reads ILKGGRPVSDVDVPKVEPESPPAEEKKKTGKATKASGKSDEIGETDSPQ. Residues 109–124 are compositionally biased toward basic and acidic residues; it reads DVPKVEPESPPAEEKK.

It belongs to the MinC family. In terms of assembly, interacts with MinD and FtsZ.

Functionally, cell division inhibitor that blocks the formation of polar Z ring septums. Rapidly oscillates between the poles of the cell to destabilize FtsZ filaments that have formed before they mature into polar Z rings. Prevents FtsZ polymerization. This chain is Probable septum site-determining protein MinC, found in Allorhizobium ampelinum (strain ATCC BAA-846 / DSM 112012 / S4) (Agrobacterium vitis (strain S4)).